The primary structure comprises 485 residues: Noelin (485 aa).

Residues 1–24 (MSVPLLKIGVVLSTMAMITNWMSQ) form the signal peptide. Residues asparagine 33, asparagine 103, asparagine 187, asparagine 288, asparagine 307, asparagine 394, asparagine 431, and asparagine 473 are each glycosylated (N-linked (GlcNAc...) asparagine). Residues 87–225 (RDARTKQLRQ…ERLRACMQKL (139 aa)) are a coiled coil. Positions 226 to 478 (ACGKLTGISD…QTLYNVTLFH (253 aa)) constitute an Olfactomedin-like domain. The cysteines at positions 227 and 409 are disulfide-linked.

As to quaternary structure, homotetramer; disulfide-linked. Dimer of dimers, giving rise to a V-shaped homotretramer. Isoform 1 and isoform 3 interact with RTN4R. Identified in a complex with RTN4R and LINGO1. Peripherally associated with AMPAR complex. AMPAR complex consists of an inner core made of 4 pore-forming GluA/GRIA proteins (GRIA1, GRIA2, GRIA3 and GRIA4) and 4 major auxiliary subunits arranged in a twofold symmetry. One of the two pairs of distinct binding sites is occupied either by CNIH2, CNIH3 or CACNG2, CACNG3. The other harbors CACNG2, CACNG3, CACNG4, CACNG8 or GSG1L. This inner core of AMPAR complex is complemented by outer core constituents binding directly to the GluA/GRIA proteins at sites distinct from the interaction sites of the inner core constituents. Outer core constituents include at least PRRT1, PRRT2, CKAMP44/SHISA9, FRRS1L and NRN1. The proteins of the inner and outer core serve as a platform for other, more peripherally associated AMPAR constituents, including OLFM1. Alone or in combination, these auxiliary subunits control the gating and pharmacology of the AMPAR complex and profoundly impact their biogenesis and protein processing. Interacts with OLFM2. In isoform 3 and isoform 4, the signal peptide is predicted to end in position 17. Expressed in the brain (at protein level). Expressed in the brain, predominantly in the cortex and hippocampus. In the pituitary only the two A-type and in the adrenal glands only the two B-type forms were detected.

It is found in the secreted. Its subcellular location is the synapse. The protein resides in the endoplasmic reticulum. The protein localises to the cell projection. It localises to the axon. It is found in the perikaryon. In terms of biological role, contributes to the regulation of axonal growth in the embryonic and adult central nervous system by inhibiting interactions between RTN4R and LINGO1. Inhibits RTN4R-mediated axon growth cone collapse. May play an important role in regulating the production of neural crest cells by the neural tube. May be required for normal responses to olfactory stimuli. In Rattus norvegicus (Rat), this protein is Noelin (Olfm1).